Reading from the N-terminus, the 98-residue chain is Co-chaperonin GroES (98 aa).

Positions 35 to 57 (EKPQEGKVISAGPGRVDDKGTRV) are disordered.

It belongs to the GroES chaperonin family. Heptamer of 7 subunits arranged in a ring. Interacts with the chaperonin GroEL.

It is found in the cytoplasm. Together with the chaperonin GroEL, plays an essential role in assisting protein folding. The GroEL-GroES system forms a nano-cage that allows encapsulation of the non-native substrate proteins and provides a physical environment optimized to promote and accelerate protein folding. GroES binds to the apical surface of the GroEL ring, thereby capping the opening of the GroEL channel. This is Co-chaperonin GroES from Cutibacterium acnes (strain DSM 16379 / KPA171202) (Propionibacterium acnes).